Reading from the N-terminus, the 196-residue chain is Spore maturation protein A (196 aa).

4 helical membrane-spanning segments follow: residues Met-1–Gly-21, Ala-37–Ile-57, Ile-133–Val-153, and Thr-163–Ile-183.

It localises to the cell membrane. Involved in spore core dehydration; might be involved in the transport of something into or out of the forespore or could be required for some modification of the cortex peptidoglycan structure. The sequence is that of Spore maturation protein A (spmA) from Bacillus subtilis (strain 168).